The primary structure comprises 103 residues: Small ribosomal subunit protein uS10 (103 aa).

Belongs to the universal ribosomal protein uS10 family. As to quaternary structure, part of the 30S ribosomal subunit.

Involved in the binding of tRNA to the ribosomes. This Sulfurovum sp. (strain NBC37-1) protein is Small ribosomal subunit protein uS10.